A 917-amino-acid chain; its full sequence is MAADVFMCSPRRPRSRGRSVLLKPQVPEDDDDSDTDEPSPPPPSGVATSARAHASAAPLPPRAGPGREEPPRRQQIIHSGHFMVSSPHREHPPKKGYDFDTVNKQTCQTYSFGKTSSCHLSIDASLTKLFECMTLAYSGKLVSPKWKNFKGLKLQWRDKIRLNNAIWRAWYMQYLEKRRNPVCHFVTPLDGSVDVDEHRRPEAITTEGKYWKSRIEIVIREYHKWRTYFKKRLQQHKDEDLSSLAQDDDMLYWHKHGDGWKTPVPMEEDSLLDTDMLMSEFSDTLFSTLSSHQPVAWPNPREIAHLGNADMIQPGLIPLQPNLDFMDTFEPFQDLFSSSRSIFGSMLPPPSSLPAADPSSPPSQGNILPNTALPPASLPNSLITSSAAPSLDPTEGQGCERTSQTVDPFIQPADFGPSEPPLSVPQPFLPVFTMTLLSPGPAPAPVPTALPLVPSPAPTLNPPTPPAFLQPQKFAGVSKSTPVITHTASATLTHDASATTFSQNQGLVITAHHPTPSSSPCALALSPVPQPPAVGPPQPHLTFIHPKPVSLTGVRHKQPPKIVPAPKPEPVSLVLKNACIAPAAFSGQPQKVIMTSAPLKREGILASTVSPSNVVIASAAITRASGVTEFLSHSTSSQPSPVSRLFSPSTVQDSLVKGEQVSLHGGSPQVPATGSSRDCPNSGQASPCPSEQSPSPQSPQNNCSGKSTDPKNVAALKNRQKHISAEQKRRFNIRMGFNTLNSLISNNSKQTSHAITLQKTMEYITKLQQERMQMQEEARRLREEIEELNTTIISCQQLLPATGVPVNCRQLDHMRDMFDEYVKSRTLQNWKFWIFSMIIKPLFESFKGMVSTSSLEEFHRTALSWLDQHCSLPVLRPMVLSTLRQLSTTTSILTDPSQLPEQASEAVTRMGKRSGES.

The interval M1–R72 is disordered. A2 bears the N-acetylalanine mark. Residues S9, S33, and S39 each carry the phosphoserine modification. Residues P27–E37 are compositionally biased toward acidic residues. Low complexity predominate over residues A47–A57. The required for cytoplasmic localization stretch occupies residues R73–D327. Positions N322 to P445 are transactivation domain. 2 disordered regions span residues L347–T402 and S632–K711. Positions L378–A388 are enriched in polar residues. A compositionally biased stretch (low complexity) spans S632 to S643. The residue at position 667 (S667) is a Phosphoserine. A compositionally biased stretch (polar residues) spans V670 to A685. Positions S686 to S704 are enriched in low complexity. The bHLH domain maps to K717 to L767. The interval L767–L788 is leucine-zipper. Residues W830 to V879 are mediates heterotypic interactions between MLXIP and MLX and is required for cytoplasmic localization. The tract at residues S897 to S917 is disordered.

Efficient DNA binding requires dimerization with another bHLH protein. Binds DNA as a homodimer or a heterodimer with MLX/TCFL4.

It is found in the cytoplasm. The protein resides in the nucleus. The protein localises to the mitochondrion outer membrane. Functionally, binds DNA as a heterodimer with MLX/TCFL4 and activates transcription. Binds to the canonical E box sequence 5'-CACGTG-3'. Plays a role in transcriptional activation of glycolytic target genes. Involved in glucose-responsive gene regulation. Regulates transcription in response to changes in cellular carbohydrate abundance such as occurs during fasting to feeding metabolic transition. Refeeding stimulates MLXIPL/ChREBP transcription factor, leading to increased BCKDK to PPM1K expression ratio, phosphorylation and activation of ACLY that ultimately results in the generation of malonyl-CoA and oxaloacetate immediate substrates of de novo lipogenesis and gluconeogenesis, respectively. The protein is MLX-interacting protein of Mus musculus (Mouse).